A 212-amino-acid chain; its full sequence is uncharacterized protein (212 aa).

Residues 87-105 (NNNNNNNNNNNHNHNNSNN) are compositionally biased toward low complexity. Residues 87–107 (NNNNNNNNNNNHNHNNSNNTA) are disordered.

This is an uncharacterized protein from Saccharomyces cerevisiae (strain ATCC 204508 / S288c) (Baker's yeast).